Reading from the N-terminus, the 70-residue chain is Peptide Hp1035 (70 aa).

A signal peptide spans 1-23; sequence MKTQFVILLVALVLFQMFAQSEA. F36 is subject to Phenylalanine amide. Residues 40–70 constitute a propeptide that is removed on maturation; the sequence is GLQDLDMDDLDQLFDGEISQADINFLNQLMR.

The protein belongs to the non-disulfide-bridged peptide (NDBP) superfamily. Short antimicrobial peptide (group 4) family. In terms of tissue distribution, expressed by the venom gland.

The protein localises to the secreted. Its subcellular location is the target cell membrane. In terms of biological role, amphipathic peptide with antimicrobial activity. The protein is Peptide Hp1035 of Heterometrus petersii (Asian forest scorpion).